We begin with the raw amino-acid sequence, 365 residues long: MNVLFAGGGTGGHLYPAIAMAGELRKLVPDVVISFVGTTGGIEATEVPRLGYRLHLIPVRGLKRGRALADIVANIGVIADFVAALGRAAALIAREAPDVVVGTGGFVSAPLLLAAQLMRKKTLIQEQNAFPGVTTKLLAALASEVHLSFDDARRFIRNKKRLFVTGNPARSFALPQQVAAREYFALSEERPTLLVFGGSRGARSINNAVLEGVDLITASANLVWQTGALDFERIKSKMQPSPYIWVAPYIEEMGVAYGAADLVLCRAGASSLAELTNLGKPSVLVPYPYATGDHQRHNARALVTGGAAMLVEDDRLGQQASIKNILELLHDKERLKRMGAASRKLAYPDSAHQLALRIISLAKKN.

UDP-N-acetyl-alpha-D-glucosamine is bound by residues 10–12 (TGG), Asn128, Arg170, Ser199, Ile250, and Gln295.

The protein belongs to the glycosyltransferase 28 family. MurG subfamily.

The protein localises to the cell inner membrane. It carries out the reaction di-trans,octa-cis-undecaprenyl diphospho-N-acetyl-alpha-D-muramoyl-L-alanyl-D-glutamyl-meso-2,6-diaminopimeloyl-D-alanyl-D-alanine + UDP-N-acetyl-alpha-D-glucosamine = di-trans,octa-cis-undecaprenyl diphospho-[N-acetyl-alpha-D-glucosaminyl-(1-&gt;4)]-N-acetyl-alpha-D-muramoyl-L-alanyl-D-glutamyl-meso-2,6-diaminopimeloyl-D-alanyl-D-alanine + UDP + H(+). It functions in the pathway cell wall biogenesis; peptidoglycan biosynthesis. Functionally, cell wall formation. Catalyzes the transfer of a GlcNAc subunit on undecaprenyl-pyrophosphoryl-MurNAc-pentapeptide (lipid intermediate I) to form undecaprenyl-pyrophosphoryl-MurNAc-(pentapeptide)GlcNAc (lipid intermediate II). The chain is UDP-N-acetylglucosamine--N-acetylmuramyl-(pentapeptide) pyrophosphoryl-undecaprenol N-acetylglucosamine transferase from Pelodictyon phaeoclathratiforme (strain DSM 5477 / BU-1).